The sequence spans 477 residues: Asparaginyl-tRNA synthetase (477 aa).

The transit peptide at 1-14 directs the protein to the mitochondrion; that stretch reads MLGVRCLLRSVRFC. An N6-acetyllysine modification is found at Lys-353.

This sequence belongs to the class-II aminoacyl-tRNA synthetase family. Homodimer.

It localises to the mitochondrion matrix. Its subcellular location is the mitochondrion. It carries out the reaction tRNA(Asn) + L-asparagine + ATP = L-asparaginyl-tRNA(Asn) + AMP + diphosphate + H(+). Functionally, mitochondrial aminoacyl-tRNA synthetase that catalyzes the specific attachment of the asparagine amino acid (aa) to the homologous transfer RNA (tRNA), further participating in protein synthesis. The reaction occurs in a two steps: asparagine is first activated by ATP to form Asn-AMP and then transferred to the acceptor end of tRNA(Asn). This chain is Asparaginyl-tRNA synthetase, found in Homo sapiens (Human).